A 464-amino-acid chain; its full sequence is Soluble pyridine nucleotide transhydrogenase (464 aa).

35–44 (DSRRQVGGNC) contributes to the FAD binding site.

The protein belongs to the class-I pyridine nucleotide-disulfide oxidoreductase family. FAD is required as a cofactor.

It localises to the cytoplasm. The catalysed reaction is NAD(+) + NADPH = NADH + NADP(+). Conversion of NADPH, generated by peripheral catabolic pathways, to NADH, which can enter the respiratory chain for energy generation. The sequence is that of Soluble pyridine nucleotide transhydrogenase from Pseudomonas putida (strain W619).